We begin with the raw amino-acid sequence, 117 residues long: UPF0122 protein Teth39_1278 (117 aa).

Belongs to the UPF0122 family.

Might take part in the signal recognition particle (SRP) pathway. This is inferred from the conservation of its genetic proximity to ftsY/ffh. May be a regulatory protein. The polypeptide is UPF0122 protein Teth39_1278 (Thermoanaerobacter pseudethanolicus (strain ATCC 33223 / 39E) (Clostridium thermohydrosulfuricum)).